A 352-amino-acid chain; its full sequence is MALPFRKDLEKYKDLDEDELLGNLSETELKQLETVLDDLDPENALLPAGFRQKNQTSKSTTGPFDREHLLSYLEKEALEHKDREDYVPYTGEKKGKIFIPKQKPVQTFTEEKVSLDPELEEALTSASDTELCDLAAILGMHNLITNTKFCNIMGSSNGVDQEHFSNVVKGEKILPVFDEPPNPTNVEESLKRTKENDAHLVEVNLNNIKNIPIPTLKDFAKALETNTHVKCFSLAATRSNDPVATAFAEMLKVNKTLKSLNVESNFITGVGILALIDALRDNETLAELKIDNQRQQLGTAVELEMAKMLEENTNILKFGYQFTQQGPRTRAANAITKNNDLVRKRRVEGDHQ.

Position 25 is a phosphoserine (Ser-25).

This sequence belongs to the tropomodulin family. In terms of assembly, binds to the N-terminus of tropomyosin and to actin. Interacts with FLII. As to expression, ubiquitous.

The protein resides in the cytoplasm. The protein localises to the cytoskeleton. Functionally, blocks the elongation and depolymerization of the actin filaments at the pointed end. The Tmod/TM complex contributes to the formation of the short actin protofilament, which in turn defines the geometry of the membrane skeleton. The polypeptide is Tropomodulin-3 (TMOD3) (Homo sapiens (Human)).